Consider the following 475-residue polypeptide: Ribulose bisphosphate carboxylase large chain (475 aa).

A propeptide spanning residues Met1–Ser2 is cleaved from the precursor. Pro3 is subject to N-acetylproline. N6,N6,N6-trimethyllysine is present on Lys14. Residues Asn123 and Thr173 each contribute to the substrate site. Lys175 functions as the Proton acceptor in the catalytic mechanism. Lys177 provides a ligand contact to substrate. Mg(2+) is bound by residues Lys201, Asp203, and Glu204. Residue Lys201 is modified to N6-carboxylysine. His294 (proton acceptor) is an active-site residue. The substrate site is built by Arg295, His327, and Ser379.

The protein belongs to the RuBisCO large chain family. Type I subfamily. In terms of assembly, heterohexadecamer of 8 large chains and 8 small chains; disulfide-linked. The disulfide link is formed within the large subunit homodimers. Mg(2+) serves as cofactor. In terms of processing, the disulfide bond which can form in the large chain dimeric partners within the hexadecamer appears to be associated with oxidative stress and protein turnover.

It is found in the plastid. Its subcellular location is the chloroplast. The catalysed reaction is 2 (2R)-3-phosphoglycerate + 2 H(+) = D-ribulose 1,5-bisphosphate + CO2 + H2O. It carries out the reaction D-ribulose 1,5-bisphosphate + O2 = 2-phosphoglycolate + (2R)-3-phosphoglycerate + 2 H(+). In terms of biological role, ruBisCO catalyzes two reactions: the carboxylation of D-ribulose 1,5-bisphosphate, the primary event in carbon dioxide fixation, as well as the oxidative fragmentation of the pentose substrate in the photorespiration process. Both reactions occur simultaneously and in competition at the same active site. The protein is Ribulose bisphosphate carboxylase large chain of Psilotum nudum (Whisk fern).